Reading from the N-terminus, the 208-residue chain is MIGKLKGIVDSYGEDFVILDVNGVGYVVHCSARTLQRLPKPGEATDLAIETHVREDMIRLYGFRVDAEREWFRLLQTVQGVGTRVALGVLSVLEPAQLATAIATGDKGAVARAPGVGPRLAARLVAELKDKAPAFAPIDPALIALTGAVEDRTAPQPVADAISALVNLGYAQIQASAAIAAALKGLGEEAGTVEAKTLIRLGLRELAR.

A domain I region spans residues 1-64 (MIGKLKGIVD…EDMIRLYGFR (64 aa)). The domain II stretch occupies residues 65–143 (VDAEREWFRL…AFAPIDPALI (79 aa)). Residues 144-152 (ALTGAVEDR) form a flexible linker region. A domain III region spans residues 153-208 (TAPQPVADAISALVNLGYAQIQASAAIAAALKGLGEEAGTVEAKTLIRLGLRELAR).

It belongs to the RuvA family. In terms of assembly, homotetramer. Forms an RuvA(8)-RuvB(12)-Holliday junction (HJ) complex. HJ DNA is sandwiched between 2 RuvA tetramers; dsDNA enters through RuvA and exits via RuvB. An RuvB hexamer assembles on each DNA strand where it exits the tetramer. Each RuvB hexamer is contacted by two RuvA subunits (via domain III) on 2 adjacent RuvB subunits; this complex drives branch migration. In the full resolvosome a probable DNA-RuvA(4)-RuvB(12)-RuvC(2) complex forms which resolves the HJ.

It localises to the cytoplasm. Functionally, the RuvA-RuvB-RuvC complex processes Holliday junction (HJ) DNA during genetic recombination and DNA repair, while the RuvA-RuvB complex plays an important role in the rescue of blocked DNA replication forks via replication fork reversal (RFR). RuvA specifically binds to HJ cruciform DNA, conferring on it an open structure. The RuvB hexamer acts as an ATP-dependent pump, pulling dsDNA into and through the RuvAB complex. HJ branch migration allows RuvC to scan DNA until it finds its consensus sequence, where it cleaves and resolves the cruciform DNA. The chain is Holliday junction branch migration complex subunit RuvA from Methylorubrum extorquens (strain CM4 / NCIMB 13688) (Methylobacterium extorquens).